The primary structure comprises 298 residues: uncharacterized protein (298 aa).

Helical transmembrane passes span 5-23 (ILVS…YFST), 33-52 (IFGY…VTLF), 72-91 (ALSY…LFLW), 101-120 (VSFG…RVFF), 127-145 (FKFI…NIVL), 149-166 (LSWE…YFSI), 175-194 (LASF…YFAL), 207-229 (FIWG…YVIA), 238-260 (LGLL…GEQI), and 265-284 (YPLF…DGVY). One can recognise an EamA domain in the interval 13–144 (FLFGYMYYFS…ATLGVISNIV (132 aa)).

This sequence belongs to the EamA transporter family.

The protein localises to the cell membrane. This is an uncharacterized protein from Haemophilus influenzae (strain ATCC 51907 / DSM 11121 / KW20 / Rd).